The following is a 191-amino-acid chain: Ribosomal RNA small subunit methyltransferase G (191 aa).

S-adenosyl-L-methionine contacts are provided by residues glycine 62, phenylalanine 67, 111 to 112 (IE), and arginine 124.

Belongs to the methyltransferase superfamily. RNA methyltransferase RsmG family.

The protein localises to the cytoplasm. The enzyme catalyses guanosine(527) in 16S rRNA + S-adenosyl-L-methionine = N(7)-methylguanosine(527) in 16S rRNA + S-adenosyl-L-homocysteine. Its function is as follows. Specifically methylates the N7 position of guanine in position 527 of 16S rRNA. The polypeptide is Ribosomal RNA small subunit methyltransferase G (Rickettsia prowazekii (strain Madrid E)).